A 160-amino-acid polypeptide reads, in one-letter code: Thialysine N-epsilon-acetyltransferase (160 aa).

The region spanning 4–159 (FEIVTVTPDH…DGAAINKFAD (156 aa)) is the N-acetyltransferase domain. Acetyl-CoA-binding positions include 84–86 (LYI), 92–97 (RMGLAR), 123–126 (NKNA), and 130–133 (YDTV).

Belongs to the acetyltransferase family. In terms of assembly, homodimer.

It carries out the reaction S-(2-aminoethyl)-L-cysteine + acetyl-CoA = S-(2-acetamidoethyl)-L-cysteine + CoA + H(+). The catalysed reaction is O-(2-aminoethyl)-L-serine + acetyl-CoA = O-(2-acetamidoethyl)-L-serine + CoA + H(+). It catalyses the reaction S-(2-aminoethyl)-homocysteine + acetyl-CoA = S-(2-acetamidoethyl)-homocysteine + CoA + H(+). Catalyzes the N-acetylation of the amino acid thialysine (S-(2-aminoethyl)-L-cysteine), a L-lysine analog with the 4-methylene group substituted with a sulfur. Substrate specificity: thialysine &gt; O-(2-aminoethyl)-L-serine &gt; S-(2-aminoethyl)-D,L-homocysteine. Does not act on polyamines, such as spermidine and spermine, nor on diamines putrescine and cadaverine. This Caenorhabditis elegans protein is Thialysine N-epsilon-acetyltransferase.